Consider the following 930-residue polypeptide: RNA-binding protein 10 (930 aa).

Composition is skewed to basic and acidic residues over residues 1–14 and 21–45; these read MEYE…DRTG and RSQD…RSYP. The interval 1 to 127 is disordered; it reads MEYERRGGRG…EDEEEEEEKA (127 aa). A compositionally biased stretch (acidic residues) spans 59 to 70; that stretch reads DSSEEQSAEDSY. Phosphoserine is present on residues Ser61 and Ser89. A compositionally biased stretch (basic residues) spans 80–89; sequence RRRRRRHRHS. Residues 98–111 show a composition bias toward basic and acidic residues; sequence RDGDYRDQDYRTEQ. Residues 112–125 show a composition bias toward acidic residues; that stretch reads GEEEEEEDEEEEEE. One can recognise an RRM 1 domain in the interval 129 to 209; sequence NIVMLRMLPQ…QKVSMHYSDP (81 aa). A RanBP2-type zinc finger spans residues 212-242; it reads KINEDWLCNKCGVQNFKRREKCFKCGVPKSE. An RRM 2 domain is found at 300-384; the sequence is DTIILRNLNP…KTINVEFAKG (85 aa). Lys383 carries the N6-acetyllysine modification. 5 disordered regions span residues 464–487, 503–522, 537–566, 620–646, and 712–753; these read GPGM…EAGA, APGL…TATN, ELQS…QYPV, EQSA…HKTK, and DLPK…EEKL. Polar residues predominate over residues 507-522; it reads YQQSAEGSSGQSTATN. Residues 540 to 562 are compositionally biased toward low complexity; sequence SPTQPSSSAFPPATSPTAPEAYS. The segment covering 623 to 639 has biased composition (basic and acidic residues); that stretch reads ADGHKDTGASSKEGKEK. Ser718, Ser723, Ser733, Ser736, and Ser738 each carry phosphoserine. The span at 743 to 753 shows a compositional bias: basic and acidic residues; the sequence is ERGGPEREEKL. Residues 759–784 form a C2H2-type; atypical zinc finger; that stretch reads LACLLCRRQFPSKEALIRHQQLSGLH. A phosphoserine mark is found at Ser781, Ser797, and Ser845. Residues 818–861 are disordered; it reads AAERREKYGIPEPPEPKRRKYGGISTASVDFEQPTRDGLGSDNI. Residues 858-904 form the G-patch domain; it reads SDNIGSRMLQAMGWKEGSGLGRKKQGIVTPIEAQTRVRGSGLGARGS. Arg902 is subject to Omega-N-methylarginine.

Associates with the spliceosome. Component of a large chromatin remodeling complex, at least composed of MYSM1, PCAF, RBM10 and KIF11/TRIP5.

The protein resides in the nucleus. Binds to ssRNA containing the consensus sequence 5'-AGGUAA-3'. May be involved in post-transcriptional processing, most probably in mRNA splicing. Binds to RNA homopolymers, with a preference for poly(G) and poly(U) and little for poly(A). May bind to specific miRNA hairpins. The chain is RNA-binding protein 10 from Mus musculus (Mouse).